We begin with the raw amino-acid sequence, 750 residues long: Photosystem I P700 chlorophyll a apoprotein A1 (750 aa).

Helical transmembrane passes span 70-93 (VFSA…FHGA), 156-179 (LYCT…FHYH), 195-219 (LNHH…HVSL), 291-309 (IAHH…GHMY), 346-369 (WHAQ…HHMY), 385-411 (LSLF…IFMV), 433-455 (AIIS…LYIH), and 531-549 (FLVH…LILL). 2 residues coordinate [4Fe-4S] cluster: Cys573 and Cys582. 2 consecutive transmembrane segments (helical) span residues 589–610 (HVFL…HFSW) and 664–686 (LSAY…MFLF). A chlorophyll a'-binding site is contributed by His675. Positions 683 and 691 each coordinate chlorophyll a. Residue Trp692 participates in phylloquinone binding. The chain crosses the membrane as a helical span at residues 724–744 (AVGVTHYLLGGIATTWAFFLA).

It belongs to the PsaA/PsaB family. In terms of assembly, the PsaA/B heterodimer binds the P700 chlorophyll special pair and subsequent electron acceptors. PSI consists of a core antenna complex that captures photons, and an electron transfer chain that converts photonic excitation into a charge separation. The eukaryotic PSI reaction center is composed of at least 11 subunits. P700 is a chlorophyll a/chlorophyll a' dimer, A0 is one or more chlorophyll a, A1 is one or both phylloquinones and FX is a shared 4Fe-4S iron-sulfur center. serves as cofactor.

The protein localises to the plastid. Its subcellular location is the chloroplast thylakoid membrane. It catalyses the reaction reduced [plastocyanin] + hnu + oxidized [2Fe-2S]-[ferredoxin] = oxidized [plastocyanin] + reduced [2Fe-2S]-[ferredoxin]. In terms of biological role, psaA and PsaB bind P700, the primary electron donor of photosystem I (PSI), as well as the electron acceptors A0, A1 and FX. PSI is a plastocyanin-ferredoxin oxidoreductase, converting photonic excitation into a charge separation, which transfers an electron from the donor P700 chlorophyll pair to the spectroscopically characterized acceptors A0, A1, FX, FA and FB in turn. Oxidized P700 is reduced on the lumenal side of the thylakoid membrane by plastocyanin. The polypeptide is Photosystem I P700 chlorophyll a apoprotein A1 (Cucumis sativus (Cucumber)).